Consider the following 60-residue polypeptide: Cytotoxin 2 (60 aa).

4 cysteine pairs are disulfide-bonded: Cys3–Cys21, Cys14–Cys38, Cys42–Cys53, and Cys54–Cys59.

This sequence belongs to the three-finger toxin family. Short-chain subfamily. Type IA cytotoxin sub-subfamily. Monomer in solution; Homodimer and oligomer in the presence of negatively charged lipids forming a pore with a size ranging between 20 and 30 Angstroms. Expressed by the venom gland.

Its subcellular location is the secreted. It localises to the target cell membrane. Functionally, shows cytolytic activity on many different cells by forming pore in lipid membranes. In vivo, increases heart rate or kills the animal by cardiac arrest. In addition, it binds to heparin with high affinity, interacts with Kv channel-interacting protein 1 (KCNIP1) in a calcium-independent manner, and binds to integrin alpha-V/beta-3 (ITGAV/ITGB3) with moderate affinity. This chain is Cytotoxin 2, found in Naja annulifera (Banded Egyptian cobra).